Consider the following 425-residue polypeptide: Histidinol dehydrogenase (425 aa).

Substrate-binding residues include serine 231, glutamine 253, and histidine 256. The Zn(2+) site is built by glutamine 253 and histidine 256. Residues glutamate 321 and histidine 322 each act as proton acceptor in the active site. 4 residues coordinate substrate: histidine 322, aspartate 355, glutamate 409, and histidine 414. Zn(2+) is bound at residue aspartate 355. Residue histidine 414 participates in Zn(2+) binding.

This sequence belongs to the histidinol dehydrogenase family. Requires Zn(2+) as cofactor.

It carries out the reaction L-histidinol + 2 NAD(+) + H2O = L-histidine + 2 NADH + 3 H(+). Its pathway is amino-acid biosynthesis; L-histidine biosynthesis; L-histidine from 5-phospho-alpha-D-ribose 1-diphosphate: step 9/9. Functionally, catalyzes the sequential NAD-dependent oxidations of L-histidinol to L-histidinaldehyde and then to L-histidine. This is Histidinol dehydrogenase from Carboxydothermus hydrogenoformans (strain ATCC BAA-161 / DSM 6008 / Z-2901).